The sequence spans 180 residues: Pro-glucagon (180 aa).

The first 20 residues, 1–20 (MKSIYFVAGLFVMLVQGSWQ), serve as a signal peptide directing secretion. A disordered region spans residues 23 to 56 (LQDTEEKPRSFSTSQTDLLDDPDQMNEDKRHSQG). Position 54 is a phosphoserine (Ser-54). The propeptide occupies 84 to 89 (NRNEIA). Phosphoserine is present on residues Ser-105 and Ser-108. At Arg-127 the chain carries Arginine amide. Residues 131 to 145 (DFPEEVTIVEELRRR) constitute a propeptide that is removed on maturation. Residues Ser-150 and Ser-152 each carry the phosphoserine modification.

It belongs to the glucagon family. In terms of processing, proglucagon is post-translationally processed in a tissue-specific manner in pancreatic A cells and intestinal L cells. In pancreatic A cells, the major bioactive hormone is glucagon cleaved by PCSK2/PC2. In the intestinal L cells PCSK1/PC1 liberates GLP-1, GLP-2, glicentin and oxyntomodulin. GLP-1 is further N-terminally truncated by post-translational processing in the intestinal L cells resulting in GLP-1(7-37) GLP-1-(7-36)amide. The C-terminal amidation is neither important for the metabolism of GLP-1 nor for its effects on the endocrine pancreas. Glucagon is secreted in the A cells of the islets of Langerhans. GLP-1, GLP-2, oxyntomodulin and glicentin are secreted from enteroendocrine cells throughout the gastrointestinal tract. GLP-1 and GLP-2 are also secreted in selected neurons in the brain.

Its subcellular location is the secreted. Plays a key role in glucose metabolism and homeostasis. Regulates blood glucose by increasing gluconeogenesis and decreasing glycolysis. A counterregulatory hormone of insulin, raises plasma glucose levels in response to insulin-induced hypoglycemia. Plays an important role in initiating and maintaining hyperglycemic conditions in diabetes. Functionally, potent stimulator of glucose-dependent insulin release. Also stimulates insulin release in response to IL6. Plays important roles on gastric motility and the suppression of plasma glucagon levels. May be involved in the suppression of satiety and stimulation of glucose disposal in peripheral tissues, independent of the actions of insulin. Has growth-promoting activities on intestinal epithelium. May also regulate the hypothalamic pituitary axis (HPA) via effects on LH, TSH, CRH, oxytocin, and vasopressin secretion. Increases islet mass through stimulation of islet neogenesis and pancreatic beta cell proliferation. Inhibits beta cell apoptosis. In terms of biological role, stimulates intestinal growth and up-regulates villus height in the small intestine, concomitant with increased crypt cell proliferation and decreased enterocyte apoptosis. The gastrointestinal tract, from the stomach to the colon is the principal target for GLP-2 action. Plays a key role in nutrient homeostasis, enhancing nutrient assimilation through enhanced gastrointestinal function, as well as increasing nutrient disposal. Stimulates intestinal glucose transport and decreases mucosal permeability. Its function is as follows. Significantly reduces food intake. Inhibits gastric emptying in humans. Suppression of gastric emptying may lead to increased gastric distension, which may contribute to satiety by causing a sensation of fullness. May modulate gastric acid secretion and the gastro-pyloro-duodenal activity. May play an important role in intestinal mucosal growth in the early period of life. This is Pro-glucagon (GCG) from Octodon degus (Degu).